The sequence spans 609 residues: Tyrosyl-DNA phosphodiesterase 1 (609 aa).

The span at 1-12 shows a compositional bias: polar residues; that stretch reads MSQESSYGKWTI. A disordered region spans residues 1 to 154; it reads MSQESSYGKW…EYETSGEGQD (154 aa). Phosphoserine occurs at positions 61, 119, and 132. A compositionally biased stretch (basic and acidic residues) spans 127-143; sequence KVEDRSPPDSHRAQRAD. Residue T148 is modified to Phosphothreonine. S149 carries the post-translational modification Phosphoserine. The Nucleophile role is filled by H264. K266 lines the substrate pocket. The segment at 401-404 is interaction with DNA; sequence SIGS. Residue H494 is the Proton donor/acceptor of the active site. Position 496 (K496) interacts with substrate.

The protein belongs to the tyrosyl-DNA phosphodiesterase family. In terms of assembly, monomer.

The protein resides in the nucleus. The protein localises to the cytoplasm. DNA repair enzyme that can remove a variety of covalent adducts from DNA through hydrolysis of a 3'-phosphodiester bond, giving rise to DNA with a free 3' phosphate. Catalyzes the hydrolysis of dead-end complexes between DNA and the topoisomerase I active site tyrosine residue. Hydrolyzes 3'-phosphoglycolates on protruding 3' ends on DNA double-strand breaks due to DNA damage by radiation and free radicals. Acts on blunt-ended double-strand DNA breaks and on single-stranded DNA. Has low 3'exonuclease activity and can remove a single nucleoside from the 3'end of DNA and RNA molecules with 3'hydroxyl groups. Has no exonuclease activity towards DNA or RNA with a 3'phosphate. This Rattus norvegicus (Rat) protein is Tyrosyl-DNA phosphodiesterase 1 (Tdp1).